A 439-amino-acid polypeptide reads, in one-letter code: Xylose isomerase (439 aa).

Catalysis depends on residues histidine 103 and aspartate 106. Glutamate 234, glutamate 270, histidine 273, aspartate 298, aspartate 309, aspartate 311, and aspartate 341 together coordinate Mg(2+).

The protein belongs to the xylose isomerase family. As to quaternary structure, homotetramer. Mg(2+) is required as a cofactor.

The protein resides in the cytoplasm. The enzyme catalyses alpha-D-xylose = alpha-D-xylulofuranose. The sequence is that of Xylose isomerase from Bacteroides fragilis (strain YCH46).